The primary structure comprises 419 residues: Putative zinc metalloprotease SPs1691 (419 aa).

Residue His-18 coordinates Zn(2+). Glu-19 is an active-site residue. His-22 contacts Zn(2+). 4 helical membrane passes run 169–191, 301–323, 343–365, and 392–411; these read LITN…ILLV, LAWS…FSLN, LESV…LIPI, and AYIT…AVTW. The 100-residue stretch at 175–274 folds into the PDZ domain; the sequence is GPMNNFILGI…LKTVAVKPQK (100 aa).

The protein belongs to the peptidase M50B family. Zn(2+) is required as a cofactor.

Its subcellular location is the cell membrane. The chain is Putative zinc metalloprotease SPs1691 (eep) from Streptococcus pyogenes serotype M3 (strain SSI-1).